An 82-amino-acid polypeptide reads, in one-letter code: Small ribosomal subunit protein uS17 (82 aa).

Belongs to the universal ribosomal protein uS17 family. As to quaternary structure, part of the 30S ribosomal subunit.

One of the primary rRNA binding proteins, it binds specifically to the 5'-end of 16S ribosomal RNA. This chain is Small ribosomal subunit protein uS17, found in Shewanella pealeana (strain ATCC 700345 / ANG-SQ1).